The chain runs to 470 residues: D-serine/D-alanine/glycine transporter (470 aa).

The next 12 membrane-spanning stretches (helical) occupy residues 30 to 50 (LIAI…KTIS), 51 to 71 (LAGP…FFVM), 102 to 122 (FTGW…VVAI), 128 to 148 (FWFP…LLLV), 162 to 182 (FWFA…GLVM), 211 to 231 (LSGF…IELV), 256 to 276 (IIMF…WSSV), 283 to 303 (FVEL…NFVV), 350 to 370 (FSCI…SVIG), 371 to 391 (AFTM…TIIL), 413 to 433 (PLGK…LVLL), and 441 to 461 (QALL…LFIG).

It belongs to the amino acid-polyamine-organocation (APC) superfamily. Amino acid transporter (AAT) (TC 2.A.3.1) family.

It is found in the cell inner membrane. The catalysed reaction is D-alanine(in) + H(+)(in) = D-alanine(out) + H(+)(out). The enzyme catalyses D-serine(out) + H(+)(out) = D-serine(in) + H(+)(in). It carries out the reaction glycine(in) + H(+)(in) = glycine(out) + H(+)(out). It catalyses the reaction D-cycloserine(in) + H(+)(in) = D-cycloserine(out) + H(+)(out). Its activity is regulated as follows. Uptake of D-serine is inhibited by D-alanine, D-cycloserine, glycine and at high concentrations of D-threonine. In terms of biological role, permease that is involved in the transport across the cytoplasmic membrane of D-alanine, D-serine and glycine. Is the only transporter of D-alanine. Transports D-serine less efficiently than DsdX. In addition, in minimal media, transports the broad spectrum antibiotic D-cycloserine into the cell. Transports D-cycloserine only in minimal media, and not in a complex medium, suggesting that CycA does not play a role in D-cycloserine transport when E.coli is grown in a complex or biologically relevant medium, probably due to competition from other CycA substrates present in the medium. The polypeptide is D-serine/D-alanine/glycine transporter (cycA) (Escherichia coli O6:H1 (strain CFT073 / ATCC 700928 / UPEC)).